The sequence spans 725 residues: Phosphoribosylformylglycinamidine synthase subunit PurL (725 aa).

His-42 is a catalytic residue. ATP is bound by residues Tyr-45 and Lys-84. Glu-86 lines the Mg(2+) pocket. Substrate is bound by residues 87–90 (SHNH) and Arg-109. His-88 (proton acceptor) is an active-site residue. Asp-110 provides a ligand contact to Mg(2+). Substrate is bound at residue Gln-237. Residue Asp-265 participates in Mg(2+) binding. 309-311 (ESQ) is a substrate binding site. Residues Asp-491 and Gly-528 each coordinate ATP. Mg(2+) is bound at residue Asn-529. Ser-531 serves as a coordination point for substrate.

It belongs to the FGAMS family. Monomer. Part of the FGAM synthase complex composed of 1 PurL, 1 PurQ and 2 PurS subunits.

It localises to the cytoplasm. The enzyme catalyses N(2)-formyl-N(1)-(5-phospho-beta-D-ribosyl)glycinamide + L-glutamine + ATP + H2O = 2-formamido-N(1)-(5-O-phospho-beta-D-ribosyl)acetamidine + L-glutamate + ADP + phosphate + H(+). It participates in purine metabolism; IMP biosynthesis via de novo pathway; 5-amino-1-(5-phospho-D-ribosyl)imidazole from N(2)-formyl-N(1)-(5-phospho-D-ribosyl)glycinamide: step 1/2. Part of the phosphoribosylformylglycinamidine synthase complex involved in the purines biosynthetic pathway. Catalyzes the ATP-dependent conversion of formylglycinamide ribonucleotide (FGAR) and glutamine to yield formylglycinamidine ribonucleotide (FGAM) and glutamate. The FGAM synthase complex is composed of three subunits. PurQ produces an ammonia molecule by converting glutamine to glutamate. PurL transfers the ammonia molecule to FGAR to form FGAM in an ATP-dependent manner. PurS interacts with PurQ and PurL and is thought to assist in the transfer of the ammonia molecule from PurQ to PurL. This is Phosphoribosylformylglycinamidine synthase subunit PurL from Campylobacter lari (strain RM2100 / D67 / ATCC BAA-1060).